Consider the following 210-residue polypeptide: Chaperone protein TorD (210 aa).

Belongs to the TorD/DmsD family. TorD subfamily.

It localises to the cytoplasm. Involved in the biogenesis of TorA. Acts on TorA before the insertion of the molybdenum cofactor and, as a result, probably favors a conformation of the apoenzyme that is competent for acquiring the cofactor. In Salmonella arizonae (strain ATCC BAA-731 / CDC346-86 / RSK2980), this protein is Chaperone protein TorD.